The primary structure comprises 240 residues: T4 protein (240 aa).

This sequence belongs to the poxviruses B9 family.

This is T4 protein from Sheeppox virus (strain InS-1) (SPPV).